Here is a 209-residue protein sequence, read N- to C-terminus: MRIGILGGTFDPIHFGHIRPAQEVKQTLNLDKVWLMPNHIPPHKTSTSVSTEQRLEMTQLVCDEYSEFELCAIEAKREAPSYLVTTLKQITNSHPNDEFFFIMGMDSLLSLDTWFEWQSLFGLCHIVVCQRPGWSLSPDSSIFSQYQSRVRSPNKITGKQSGLIIPIPVTPQAISSTHIREQLSEGITPTNALPDKIIQYIEDKNLYRT.

It belongs to the NadD family.

It catalyses the reaction nicotinate beta-D-ribonucleotide + ATP + H(+) = deamido-NAD(+) + diphosphate. It participates in cofactor biosynthesis; NAD(+) biosynthesis; deamido-NAD(+) from nicotinate D-ribonucleotide: step 1/1. Its function is as follows. Catalyzes the reversible adenylation of nicotinate mononucleotide (NaMN) to nicotinic acid adenine dinucleotide (NaAD). The protein is Probable nicotinate-nucleotide adenylyltransferase of Shewanella woodyi (strain ATCC 51908 / MS32).